The chain runs to 430 residues: Enolase (430 aa).

Residue Gln-164 coordinates (2R)-2-phosphoglycerate. The active-site Proton donor is Glu-206. Asp-243, Glu-288, and Asp-315 together coordinate Mg(2+). 4 residues coordinate (2R)-2-phosphoglycerate: Lys-340, Arg-369, Ser-370, and Lys-391. The Proton acceptor role is filled by Lys-340.

The protein belongs to the enolase family. The cofactor is Mg(2+).

The protein localises to the cytoplasm. The protein resides in the secreted. It localises to the cell surface. The enzyme catalyses (2R)-2-phosphoglycerate = phosphoenolpyruvate + H2O. The protein operates within carbohydrate degradation; glycolysis; pyruvate from D-glyceraldehyde 3-phosphate: step 4/5. Catalyzes the reversible conversion of 2-phosphoglycerate (2-PG) into phosphoenolpyruvate (PEP). It is essential for the degradation of carbohydrates via glycolysis. The sequence is that of Enolase from Lysinibacillus sphaericus (strain C3-41).